The primary structure comprises 334 residues: Formamidase (334 aa).

A CN hydrolase domain is found at 14–260; it reads FLVAAIQFPV…WEIVTGEIYP (247 aa). Catalysis depends on E60, which acts as the Proton acceptor. K133 acts as the Proton donor in catalysis. C166 functions as the Nucleophile in the catalytic mechanism.

It belongs to the carbon-nitrogen hydrolase superfamily. Aliphatic amidase family.

It catalyses the reaction formamide + H2O = formate + NH4(+). Is an aliphatic amidase with a restricted substrate specificity, as it only hydrolyzes formamide. The polypeptide is Formamidase (Helicobacter pylori (strain HPAG1)).